The primary structure comprises 207 residues: MNIKLDSVITERAAGLHAAAVIYENIEVGSSPQMLKGRLRLFQESLFFDYADGGISDESFVKEWQKLFKQLNPSFEGETTPMEDMLVPISKEQFMESKDSAHDTIDFFALKYSLPIMIYDAGKLHEPVRISLGEKENILLFSDENGIFGDFKNSVNHYPVSNETKNMLQIIFFPPSIEKSSAVNLLSSLTKMFEQIHGGTHTVHWLT.

This is an uncharacterized protein from Bacillus subtilis (strain 168).